A 100-amino-acid chain; its full sequence is Large ribosomal subunit protein uL23 (100 aa).

It belongs to the universal ribosomal protein uL23 family. As to quaternary structure, part of the 50S ribosomal subunit. Contacts protein L29, and trigger factor when it is bound to the ribosome.

In terms of biological role, one of the early assembly proteins it binds 23S rRNA. One of the proteins that surrounds the polypeptide exit tunnel on the outside of the ribosome. Forms the main docking site for trigger factor binding to the ribosome. The sequence is that of Large ribosomal subunit protein uL23 from Prochlorococcus marinus (strain AS9601).